The chain runs to 206 residues: Nucleoside triphosphate pyrophosphatase (206 aa).

The active-site Proton acceptor is the Asp-76.

The protein belongs to the Maf family. The cofactor is a divalent metal cation.

It localises to the cytoplasm. The catalysed reaction is a ribonucleoside 5'-triphosphate + H2O = a ribonucleoside 5'-phosphate + diphosphate + H(+). It carries out the reaction a 2'-deoxyribonucleoside 5'-triphosphate + H2O = a 2'-deoxyribonucleoside 5'-phosphate + diphosphate + H(+). Nucleoside triphosphate pyrophosphatase. May have a dual role in cell division arrest and in preventing the incorporation of modified nucleotides into cellular nucleic acids. The chain is Nucleoside triphosphate pyrophosphatase from Streptomyces coelicolor (strain ATCC BAA-471 / A3(2) / M145).